Here is a 161-residue protein sequence, read N- to C-terminus: Allophycocyanin beta chain (161 aa).

At Asn-71 the chain carries N4-methylasparagine. Cys-81 is a binding site for (2R,3E)-phycocyanobilin.

The protein belongs to the phycobiliprotein family. In terms of assembly, heterodimer of an alpha and a beta chain. In terms of processing, contains one covalently linked phycocyanobilin chromophore.

The protein resides in the plastid. It localises to the chloroplast thylakoid membrane. Its function is as follows. Light-harvesting photosynthetic bile pigment-protein from the phycobiliprotein complex. Allophycocyanin has a maximum absorption at approximately 650 nanometers. This is Allophycocyanin beta chain (apcB) from Porphyra purpurea (Red seaweed).